The primary structure comprises 372 residues: Probable leucine aminopeptidase MCYG_08380 (372 aa).

An N-terminal signal peptide occupies residues 1 to 19; that stretch reads MKVSVLAAVAAFAAATAIA. N96 is a glycosylation site (N-linked (GlcNAc...) asparagine). Zn(2+) contacts are provided by H175 and D194. N-linked (GlcNAc...) asparagine glycosylation is found at N195 and N219. Residues E233 and D260 each coordinate Zn(2+). A disulfide bond links C305 and C309. Residue H338 coordinates Zn(2+).

This sequence belongs to the peptidase M28 family. M28E subfamily. In terms of assembly, monomer. The cofactor is Zn(2+).

The protein localises to the secreted. In terms of biological role, probable extracellular aminopeptidase which contributes to pathogenicity. In Arthroderma otae (strain ATCC MYA-4605 / CBS 113480) (Microsporum canis), this protein is Probable leucine aminopeptidase MCYG_08380.